A 477-amino-acid polypeptide reads, in one-letter code: Aspartyl/glutamyl-tRNA(Asn/Gln) amidotransferase subunit B (477 aa).

It belongs to the GatB/GatE family. GatB subfamily. Heterotrimer of A, B and C subunits.

It carries out the reaction L-glutamyl-tRNA(Gln) + L-glutamine + ATP + H2O = L-glutaminyl-tRNA(Gln) + L-glutamate + ADP + phosphate + H(+). It catalyses the reaction L-aspartyl-tRNA(Asn) + L-glutamine + ATP + H2O = L-asparaginyl-tRNA(Asn) + L-glutamate + ADP + phosphate + 2 H(+). Its function is as follows. Allows the formation of correctly charged Asn-tRNA(Asn) or Gln-tRNA(Gln) through the transamidation of misacylated Asp-tRNA(Asn) or Glu-tRNA(Gln) in organisms which lack either or both of asparaginyl-tRNA or glutaminyl-tRNA synthetases. The reaction takes place in the presence of glutamine and ATP through an activated phospho-Asp-tRNA(Asn) or phospho-Glu-tRNA(Gln). The protein is Aspartyl/glutamyl-tRNA(Asn/Gln) amidotransferase subunit B of Lawsonia intracellularis (strain PHE/MN1-00).